A 560-amino-acid chain; its full sequence is Membrane protein insertase YidC (560 aa).

The next 6 helical transmembrane spans lie at 7–27, 334–354, 357–377, 431–451, 476–496, and 522–542; these read NLIA…YFVV, AIDF…MNFF, YVGN…LLMF, LPIL…YVTI, LFGF…WPIL, and FMPL…LIYW.

It belongs to the OXA1/ALB3/YidC family. Type 1 subfamily. Interacts with the Sec translocase complex via SecD. Specifically interacts with transmembrane segments of nascent integral membrane proteins during membrane integration.

The protein resides in the cell inner membrane. Required for the insertion and/or proper folding and/or complex formation of integral membrane proteins into the membrane. Involved in integration of membrane proteins that insert both dependently and independently of the Sec translocase complex, as well as at least some lipoproteins. Aids folding of multispanning membrane proteins. In Rickettsia canadensis (strain McKiel), this protein is Membrane protein insertase YidC.